The following is a 468-amino-acid chain: Histone acetyltransferase type B catalytic subunit (468 aa).

Phosphoserine is present on Ser8. 2 interaction with histone H4 N-terminus regions span residues Glu44–Glu46 and Tyr208–Phe210. Acetyl-CoA is bound by residues Phe248–Ile250 and Gln255–Ser261. The active-site Proton donor/acceptor is the Glu283. Residues Ser442–Ala468 are disordered.

The protein belongs to the HAT1 family. Component of the HAT-B complex composed of at least HAT1 and HAT2. The HAT-B complex binds to histone H4 tail. In the nucleus, interacts with GSK1 and SSB1. In the cytoplasm, interacts with ATG3 and ATG9. Phosphorylated at Ser-8 by GSK1 in the nucleus which impairs its translocation to the cytoplasm through interfering the interaction between HAT1 and SSB1. Dephosphorylation under nutrient starvation conditions promotes the interaction between HAT1 and SSB1 and results in the translocation of HAT1 from the nucleus to the cytoplasm in order to acetylate ATG3 and ATG9.

It localises to the nucleus. The protein localises to the cytoplasm. Its subcellular location is the preautophagosomal structure. It carries out the reaction L-lysyl-[protein] + acetyl-CoA = N(6)-acetyl-L-lysyl-[protein] + CoA + H(+). Catalytic component of the histone acetylase B (HAT-B) complex. Has intrinsic substrate specificity that modifies lysine in recognition sequence GXGKXG. Involved in DNA double-strand break repair. Required for appressorium turgor pressure, autophagy and conidial nuclear degradation. During the germination process and upon starvation conditions, translocates from the nucleus to the cytoplasm where it acetylates ATG3 at 'lys-262' and 'Lys-267', thus influencing autophagy through controlling ATG3-ATG8 interaction. Also acetylates ATG9 at 'Lys-621' to regulate ATG9 binding to vesicles, which is also important for autophagy and pathogenicity. In Pyricularia oryzae (strain 70-15 / ATCC MYA-4617 / FGSC 8958) (Rice blast fungus), this protein is Histone acetyltransferase type B catalytic subunit.